The following is a 65-amino-acid chain: Large ribosomal subunit protein uL29 (65 aa).

Belongs to the universal ribosomal protein uL29 family.

The polypeptide is Large ribosomal subunit protein uL29 (Paracidovorax citrulli (strain AAC00-1) (Acidovorax citrulli)).